The chain runs to 276 residues: Large ribosomal subunit protein uL2 (276 aa).

Positions 223 to 276 are disordered; it reads GVAMNPVDHPHGGGEGRGKGHHPTSPWGLPTKGYKTRRGKRPSDKFIVRRRNEV. Composition is skewed to basic and acidic residues over residues 230–240 and 263–276; these read DHPHGGGEGRG and RPSDKFIVRRRNEV.

Belongs to the universal ribosomal protein uL2 family. As to quaternary structure, part of the 50S ribosomal subunit. Forms a bridge to the 30S subunit in the 70S ribosome.

One of the primary rRNA binding proteins. Required for association of the 30S and 50S subunits to form the 70S ribosome, for tRNA binding and peptide bond formation. It has been suggested to have peptidyltransferase activity; this is somewhat controversial. Makes several contacts with the 16S rRNA in the 70S ribosome. In Thermotoga maritima (strain ATCC 43589 / DSM 3109 / JCM 10099 / NBRC 100826 / MSB8), this protein is Large ribosomal subunit protein uL2.